A 282-amino-acid polypeptide reads, in one-letter code: ATP synthase gamma chain (282 aa).

It belongs to the ATPase gamma chain family. F-type ATPases have 2 components, CF(1) - the catalytic core - and CF(0) - the membrane proton channel. CF(1) has five subunits: alpha(3), beta(3), gamma(1), delta(1), epsilon(1). CF(0) has three main subunits: a, b and c.

The protein resides in the cell membrane. Functionally, produces ATP from ADP in the presence of a proton gradient across the membrane. The gamma chain is believed to be important in regulating ATPase activity and the flow of protons through the CF(0) complex. This is ATP synthase gamma chain from Clostridium acetobutylicum (strain ATCC 824 / DSM 792 / JCM 1419 / IAM 19013 / LMG 5710 / NBRC 13948 / NRRL B-527 / VKM B-1787 / 2291 / W).